A 744-amino-acid polypeptide reads, in one-letter code: ATP-dependent zinc metalloprotease FtsH (744 aa).

Over 1–16 the chain is Cytoplasmic; that stretch reads MQDQNNSNTPKKKKLS. Residues 17–37 form a helical membrane-spanning segment; that stretch reads FWGIIGIVASILVLLVIAYII. Residues 38–177 lie on the Extracellular side of the membrane; it reads YYYVSQTTVL…ESIWSTVLRY (140 aa). Residues 178-198 traverse the membrane as a helical segment; it reads GTNIIFLLLFAASFIFMFMSF. Residues 199 to 744 lie on the Cytoplasmic side of the membrane; the sequence is RSQRGTGGLL…EEKSKDEKNN (546 aa). 264–271 is an ATP binding site; it reads GPPGTGKT. Residue His486 participates in Zn(2+) binding. Glu487 is an active-site residue. Positions 490 and 564 each coordinate Zn(2+). Positions 722–744 are disordered; that stretch reads IEANKSSSKSTVNEEKSKDEKNN. The segment covering 733 to 744 has biased composition (basic and acidic residues); the sequence is VNEEKSKDEKNN.

The protein in the central section; belongs to the AAA ATPase family. In the C-terminal section; belongs to the peptidase M41 family. In terms of assembly, homohexamer. Requires Zn(2+) as cofactor.

Its subcellular location is the cell membrane. In terms of biological role, acts as a processive, ATP-dependent zinc metallopeptidase for both cytoplasmic and membrane proteins. Plays a role in the quality control of integral membrane proteins. The protein is ATP-dependent zinc metalloprotease FtsH of Metamycoplasma arthritidis (strain 158L3-1) (Mycoplasma arthritidis).